The sequence spans 157 residues: 2-C-methyl-D-erythritol 2,4-cyclodiphosphate synthase (157 aa).

A divalent metal cation-binding residues include aspartate 8 and histidine 10. Residues 8 to 10 (DVH) and 34 to 35 (HS) contribute to the 4-CDP-2-C-methyl-D-erythritol 2-phosphate site. Position 42 (histidine 42) interacts with a divalent metal cation. 4-CDP-2-C-methyl-D-erythritol 2-phosphate is bound by residues 56 to 58 (DIG), 61 to 65 (FPDTD), 100 to 106 (AQAPKMA), 132 to 135 (TTTE), phenylalanine 139, and arginine 142.

It belongs to the IspF family. Homotrimer. It depends on a divalent metal cation as a cofactor.

It carries out the reaction 4-CDP-2-C-methyl-D-erythritol 2-phosphate = 2-C-methyl-D-erythritol 2,4-cyclic diphosphate + CMP. Its pathway is isoprenoid biosynthesis; isopentenyl diphosphate biosynthesis via DXP pathway; isopentenyl diphosphate from 1-deoxy-D-xylulose 5-phosphate: step 4/6. Functionally, involved in the biosynthesis of isopentenyl diphosphate (IPP) and dimethylallyl diphosphate (DMAPP), two major building blocks of isoprenoid compounds. Catalyzes the conversion of 4-diphosphocytidyl-2-C-methyl-D-erythritol 2-phosphate (CDP-ME2P) to 2-C-methyl-D-erythritol 2,4-cyclodiphosphate (ME-CPP) with a corresponding release of cytidine 5-monophosphate (CMP). In Pseudomonas aeruginosa (strain UCBPP-PA14), this protein is 2-C-methyl-D-erythritol 2,4-cyclodiphosphate synthase.